The following is a 471-amino-acid chain: Tryptophanase (471 aa).

Lys-270 bears the N6-(pyridoxal phosphate)lysine mark.

The protein belongs to the beta-eliminating lyase family. As to quaternary structure, homotetramer. The cofactor is pyridoxal 5'-phosphate.

It catalyses the reaction L-tryptophan + H2O = indole + pyruvate + NH4(+). The protein operates within amino-acid degradation; L-tryptophan degradation via pyruvate pathway; indole and pyruvate from L-tryptophan: step 1/1. The polypeptide is Tryptophanase (Histophilus somni (strain 2336) (Haemophilus somnus)).